Reading from the N-terminus, the 406-residue chain is Succinylornithine transaminase (406 aa).

N6-(pyridoxal phosphate)lysine is present on lysine 252.

The protein belongs to the class-III pyridoxal-phosphate-dependent aminotransferase family. AstC subfamily. Requires pyridoxal 5'-phosphate as cofactor.

It catalyses the reaction N(2)-succinyl-L-ornithine + 2-oxoglutarate = N-succinyl-L-glutamate 5-semialdehyde + L-glutamate. The protein operates within amino-acid degradation; L-arginine degradation via AST pathway; L-glutamate and succinate from L-arginine: step 3/5. Functionally, catalyzes the transamination of N(2)-succinylornithine and alpha-ketoglutarate into N(2)-succinylglutamate semialdehyde and glutamate. Can also act as an acetylornithine aminotransferase. This Escherichia fergusonii (strain ATCC 35469 / DSM 13698 / CCUG 18766 / IAM 14443 / JCM 21226 / LMG 7866 / NBRC 102419 / NCTC 12128 / CDC 0568-73) protein is Succinylornithine transaminase.